An 83-amino-acid chain; its full sequence is High-potential iron-sulfur protein (83 aa).

The [4Fe-4S] cluster site is built by Cys-43, Cys-46, Cys-61, and Cys-75.

The protein belongs to the high-potential iron-sulfur protein (HiPIP) family. As to quaternary structure, homodimer.

Its function is as follows. Specific class of high-redox-potential 4Fe-4S ferredoxins. Functions in anaerobic electron transport in most purple and in some other photosynthetic bacteria and in at least one genus (Paracoccus) of halophilic, denitrifying bacteria. This chain is High-potential iron-sulfur protein (hip), found in Thermochromatium tepidum (Chromatium tepidum).